A 315-amino-acid polypeptide reads, in one-letter code: Methionyl-tRNA formyltransferase (315 aa).

Positions 2–189 are N-terminal domain; that stretch reads SDSLRIIFAG…LITTLKQLAD (188 aa). 113 to 116 is a (6S)-5,6,7,8-tetrahydrofolate binding site; it reads SLLP. The tract at residues 210–315 is C-terminal domain; the sequence is KEEARIDWSL…EWFIPGNRLA (106 aa).

This sequence belongs to the Fmt family.

The catalysed reaction is L-methionyl-tRNA(fMet) + (6R)-10-formyltetrahydrofolate = N-formyl-L-methionyl-tRNA(fMet) + (6S)-5,6,7,8-tetrahydrofolate + H(+). Functionally, attaches a formyl group to the free amino group of methionyl-tRNA(fMet). The formyl group appears to play a dual role in the initiator identity of N-formylmethionyl-tRNA by promoting its recognition by IF2 and preventing the misappropriation of this tRNA by the elongation apparatus. This chain is Methionyl-tRNA formyltransferase, found in Salmonella typhi.